The primary structure comprises 177 residues: MCGVVVVIVALVPADPLLPAFACGCSCDAPVFIPFFNISSSIILICSTCVFLNRSYFSSRSFSISCISKPCRLSCPSFSVVLYSGNKFLTMVRISLMPSFLFPFATLLCLLKFVSSLISKLFCISLVNLTSDIRRLFPIMLIPPPFLTSSSFLLEIKVCISCNTTNSLTSLSIYAFL.

Positions 1-22 (MCGVVVVIVALVPADPLLPAFA) are cleaved as a signal peptide. Helical transmembrane passes span 31–51 (VFIP…TCVF), 94–114 (ISLM…LKFV), and 136–156 (LFPI…LLEI).

The protein localises to the membrane. This is an uncharacterized protein from Saccharomyces cerevisiae (strain ATCC 204508 / S288c) (Baker's yeast).